The primary structure comprises 540 residues: Isocitrate lyase (540 aa).

103 to 105 (SGW) is a binding site for substrate. Residue aspartate 187 coordinates Mg(2+). Cysteine 225 acts as the Proton acceptor in catalysis. Residues 226 to 227 (GH), 385 to 389 (NNSPS), and threonine 458 contribute to the substrate site.

It belongs to the isocitrate lyase/PEP mutase superfamily. Isocitrate lyase family. As to quaternary structure, homotetramer. Requires Mg(2+) as cofactor.

It catalyses the reaction D-threo-isocitrate = glyoxylate + succinate. It participates in carbohydrate metabolism; glyoxylate cycle; (S)-malate from isocitrate: step 1/2. It functions in the pathway one-carbon metabolism; formaldehyde assimilation via serine pathway. In the presence of magnesium, inhibited by oxalate, potassium cyanide, manganese, silver, cadmium and to a lesser extent by succinate, glycolate, iodoacetamide, DL-penicillamine, aluminum, sodium, potassium, lithium and strontium. Involved in the metabolic adaptation in response to environmental changes. Catalyzes the reversible formation of succinate and glyoxylate from isocitrate, a key step of the glyoxylate cycle, which operates as an anaplerotic route for replenishing the tricarboxylic acid cycle during growth on fatty acid substrates. May be involved in the assimilation of one-carbon compounds via the isocitrate lyase-positive serine pathway. In Hyphomicrobium methylovorum, this protein is Isocitrate lyase.